The sequence spans 337 residues: Visual pigment-like receptor peropsin (337 aa).

Residues 1-26 (MLSEASDFNSSGSRSEGSVFSRTEHS) are Extracellular-facing. N-linked (GlcNAc...) asparagine glycosylation is present at Asn9. Residues 27 to 49 (VIAAYLIVAGITSILSNVVVLGI) form a helical membrane-spanning segment. Over 50 to 61 (FIKYKELRTPTN) the chain is Cytoplasmic. The helical transmembrane segment at 62-87 (AVIINLAFTDIGVSSIGYPMSAASDL) threads the bilayer. The Extracellular portion of the chain corresponds to 88–101 (HGSWKFGHAGCQIY). Cys98 and Cys175 are joined by a disulfide. The chain crosses the membrane as a helical span at residues 102–121 (AGLNIFFGMVSIGLLTVVAM). Topologically, residues 122-140 (DRYLTISCPDVGRRMTTNT) are cytoplasmic. Residues 141–164 (YLSMILGAWINGLFWALMPIIGWA) form a helical membrane-spanning segment. Over 165-188 (SYAPDPTGATCTINWRNNDTSFVS) the chain is Extracellular. Residue Asn182 is glycosylated (N-linked (GlcNAc...) asparagine). The helical transmembrane segment at 189–212 (YTMMVIVVNFIVPLTVMFYCYYHV) threads the bilayer. Residues 213–240 (SRSLRLYAASDCTAHLHRDWADQADVTK) lie on the Cytoplasmic side of the membrane. Residues 241–264 (MSVIMILMFLLAWSPYSIVCLWAC) traverse the membrane as a helical segment. Topologically, residues 265–272 (FGNPKKIP) are extracellular. Residues 273-297 (PSMAIIAPLFAKSSTFYNPCIYVAA) traverse the membrane as a helical segment. Lys284 bears the N6-(retinylidene)lysine mark. Residues 298–337 (HKKFRKAMLAMFKCQPHLAVPEPSTLPMDMPQSSLAPVRI) lie on the Cytoplasmic side of the membrane.

This sequence belongs to the G-protein coupled receptor 1 family. Opsin subfamily. In terms of tissue distribution, found only in the eye, where it is localized to the retinal pigment epithelium (RPE). In the RPE, it is localized to the microvilli that surround the photoreceptor outer segments.

Its subcellular location is the membrane. In terms of biological role, may play a role in rpe physiology either by detecting light directly or by monitoring the concentration of retinoids or other photoreceptor-derived compounds. The polypeptide is Visual pigment-like receptor peropsin (Rrh) (Mus musculus (Mouse)).